A 323-amino-acid polypeptide reads, in one-letter code: ADP-L-glycero-D-manno-heptose-6-epimerase (323 aa).

NADP(+)-binding positions include 10–11 (FI), 31–32 (DN), Lys-38, Arg-53, 75–79 (MGACS), and Asn-92. Residue Tyr-143 is the Proton acceptor of the active site. NADP(+) is bound at residue Lys-147. A substrate-binding site is contributed by Asn-170. Residues Val-171 and Lys-179 each contribute to the NADP(+) site. Catalysis depends on Lys-179, which acts as the Proton acceptor. Substrate is bound by residues Asp-181, Lys-188, 202–205 (FRSC), Arg-216, and Tyr-281.

This sequence belongs to the NAD(P)-dependent epimerase/dehydratase family. HldD subfamily. As to quaternary structure, homopentamer. NADP(+) is required as a cofactor.

The catalysed reaction is ADP-D-glycero-beta-D-manno-heptose = ADP-L-glycero-beta-D-manno-heptose. Its pathway is nucleotide-sugar biosynthesis; ADP-L-glycero-beta-D-manno-heptose biosynthesis; ADP-L-glycero-beta-D-manno-heptose from D-glycero-beta-D-manno-heptose 7-phosphate: step 4/4. In terms of biological role, catalyzes the interconversion between ADP-D-glycero-beta-D-manno-heptose and ADP-L-glycero-beta-D-manno-heptose via an epimerization at carbon 6 of the heptose. The protein is ADP-L-glycero-D-manno-heptose-6-epimerase of Nitratidesulfovibrio vulgaris (strain ATCC 29579 / DSM 644 / CCUG 34227 / NCIMB 8303 / VKM B-1760 / Hildenborough) (Desulfovibrio vulgaris).